A 229-amino-acid polypeptide reads, in one-letter code: Cytidylate kinase (229 aa).

10-18 lines the ATP pocket; the sequence is GFSSCGKST.

The protein belongs to the cytidylate kinase family. Type 1 subfamily.

The protein localises to the cytoplasm. It catalyses the reaction CMP + ATP = CDP + ADP. The enzyme catalyses dCMP + ATP = dCDP + ADP. The sequence is that of Cytidylate kinase from Bacteroides thetaiotaomicron (strain ATCC 29148 / DSM 2079 / JCM 5827 / CCUG 10774 / NCTC 10582 / VPI-5482 / E50).